The primary structure comprises 2006 residues: Sodium channel protein type 2 subunit alpha (2006 aa).

Serine 4 bears the Phosphoserine mark. A disordered region spans residues 28 to 61 (RIAEEKAKRPKQERKDEDDENGPKPNSDLEAGKS). Lysine 38 participates in a covalent cross-link: Glycyl lysine isopeptide (Lys-Gly) (interchain with G-Cter in SUMO1). An I repeat occupies 111-456 (ILTPFNPIRK…QQMLEQLKKQ (346 aa)). Residues 130-148 (LFNVLIMCTILTNCVFMTM) form a helical membrane-spanning segment. A helical membrane pass occupies residues 156 to 176 (KNVEYTFTGIYTFESLIKILA). Residues 191-208 (WNWLDFTVITFAYVTEFV) traverse the membrane as a helical segment. A helical membrane pass occupies residues 215 to 231 (ALRTFRVLRALKTISVI). Residues 251-270 (VMILTVFCLSVFALIGLQLF) form a helical membrane-spanning segment. A disulfide bridge links cysteine 278 with cysteine 338. N-linked (GlcNAc...) asparagine glycans are attached at residues asparagine 285, asparagine 291, asparagine 297, asparagine 303, asparagine 308, and asparagine 340. Positions 370-394 (FSWAFLSLFRLMTQDFWENLYQLTL) form an intramembrane region, pore-forming. A helical transmembrane segment spans residues 402-422 (MIFFVLVIFLGSFYLINLILA). Serine 468, serine 471, serine 484, serine 526, serine 528, serine 531, serine 553, serine 554, serine 558, serine 573, serine 576, serine 589, serine 610, serine 623, serine 687, serine 688, and serine 722 each carry phosphoserine. A disordered region spans residues 494 to 529 (SSKSEKELKNRRKKKKQKEQAGEEEKEDAVRKSASE). A compositionally biased stretch (basic and acidic residues) spans 511-529 (KEQAGEEEKEDAVRKSASE). The segment at 589–635 (SENDFADDEHSTFEDNDSRRDSLFVPHRHGERRPSNVSQASRASRGI) is disordered. Basic and acidic residues predominate over residues 596–610 (DEHSTFEDNDSRRDS). The stretch at 742–1014 (CCKPWLKVKH…QIAVGRMQKG (273 aa)) is one II repeat. A helical membrane pass occupies residues 761–779 (FVDLAITICIVLNTLFMAM). The chain crosses the membrane as a helical span at residues 791–810 (VLSVGNLVFTGIFTAEMFLK). Residues 825 to 844 (NIFDGFIVSLSLMELGLANV) traverse the membrane as a helical segment. A helical membrane pass occupies residues 847 to 864 (LSVLRSFRLLRVFKLAKS). Residues 881 to 899 (ALGNLTLVLAIIVFIFAVV) form a helical membrane-spanning segment. Cysteine 913 and cysteine 919 form a disulfide bridge. The segment at 918–919 (DC) is binds SCN2B. The pore-forming intramembrane region spans 929-949 (FFHSFLIVFRVLCGEWIETMW). Cysteine 951 and cysteine 960 are disulfide-bonded. A helical transmembrane segment spans residues 963 to 983 (VFMMVMVIGNLVVLNLFLALL). Residues 1121–1167 (EEFSSESDMEESKEKLNATSSSEGSTVDIGAPAEGEQPEAEPEESLE) form a disordered region. The segment covering 1156–1167 (EQPEAEPEESLE) has biased composition (acidic residues). One copy of the III repeat lies at 1191–1505 (KGKLWWNLRK…KKYYNAMKKL (315 aa)). The helical transmembrane segment at 1211 to 1228 (FETFIVFMILLSSGALAF) threads the bilayer. Residues 1242-1260 (MLEYADKVFTYIFILEMLL) traverse the membrane as a helical segment. The helical transmembrane segment at 1275 to 1293 (WCWLDFLIVDVSLVSLTAN) threads the bilayer. The helical transmembrane segment at 1302-1320 (AIKSLRTLRALRPLRALSR) threads the bilayer. A helical membrane pass occupies residues 1338-1357 (IMNVLLVCLIFWLIFSIMGV). Cysteines 1367 and 1387 form a disulfide. Positions 1410 to 1431 (GLGYLSLLQVATFKGWMDIMYA) form an intramembrane region, pore-forming. Residues 1449-1470 (YMYLYFVIFIIFGSFFTLNLFI) traverse the membrane as a helical segment. Serine 1507 is modified (phosphoserine). The IV repeat unit spans residues 1514-1812 (IPRPANKFQG…WEKFDPDATQ (299 aa)). The helical transmembrane segment at 1534–1551 (FDISIMILICLNMVTMMV) threads the bilayer. The chain crosses the membrane as a helical span at residues 1563–1581 (ILYWINLVFIVLFTGECVL). A helical transmembrane segment spans residues 1594–1611 (GWNIFDFVVVILSIVGMF). A helical transmembrane segment spans residues 1625–1641 (LFRVIRLARIGRILRLI). A helical transmembrane segment spans residues 1661–1678 (LFNIGLLLFLVMFIYAIF). An intramembrane region (pore-forming) is located at residues 1701–1723 (FGNSMICLFQITTSAGWDGLLAP). The cysteines at positions 1732 and 1747 are disulfide-linked. Residues 1754–1776 (IFFFVSYIIISFLVVVNMYIAVI) form a helical membrane-spanning segment. Residues 1906–1935 (EEVSAIVIQRAYRRYLLKQKVKKVSSIYKK) enclose the IQ domain. Serine 1931 is subject to Phosphoserine. Positions 1934–1965 (KKDKGKEDEGTPIKEDIITDKLNENSTPEKTD) are enriched in basic and acidic residues. The disordered stretch occupies residues 1934–2006 (KKDKGKEDEG…KGKDIRESKK (73 aa)). A phosphothreonine mark is found at threonine 1944, threonine 1964, and threonine 1967. Phosphoserine is present on serine 1972. Over residues 1980–2006 (TKPEKEKFEKDKSEKEDKGKDIRESKK) the composition is skewed to basic and acidic residues.

The protein belongs to the sodium channel (TC 1.A.1.10) family. Nav1.2/SCN2A subfamily. In terms of assembly, heterooligomer of a large alpha subunit and a smaller beta subunit. Heterooligomer with SCN2B or SCN4B; disulfide-linked. Interacts with NEDD4L. Interacts with CALM. Interacts with TMEM233. In terms of processing, sumoylated at Lys-38. Sumoylation is induced by hypoxia, increases voltage-gated sodium current and mediates the early response to acute hypoxia in neurons. Sumoylated SCN2A is located at the cell membrane. In terms of tissue distribution, expressed in brain (at protein level). Detected in hippocampus, cortex and brain stem.

It localises to the cell membrane. It catalyses the reaction Na(+)(in) = Na(+)(out). Mediates the voltage-dependent sodium ion permeability of excitable membranes. Assuming opened or closed conformations in response to the voltage difference across the membrane, the protein forms a sodium-selective channel through which Na(+) ions may pass in accordance with their electrochemical gradient. Implicated in the regulation of hippocampal replay occurring within sharp wave ripples (SPW-R) important for memory. This Mus musculus (Mouse) protein is Sodium channel protein type 2 subunit alpha.